The sequence spans 71 residues: DNA-directed RNA polymerase subunit epsilon (71 aa).

The protein belongs to the RNA polymerase subunit epsilon family. In terms of assembly, RNAP is composed of a core of 2 alpha, a beta and a beta' subunit. The core is associated with a delta subunit, and at least one of epsilon or omega. When a sigma factor is associated with the core the holoenzyme is formed, which can initiate transcription.

It catalyses the reaction RNA(n) + a ribonucleoside 5'-triphosphate = RNA(n+1) + diphosphate. Functionally, a non-essential component of RNA polymerase (RNAP). The protein is DNA-directed RNA polymerase subunit epsilon of Anoxybacillus flavithermus (strain DSM 21510 / WK1).